The following is a 315-amino-acid chain: Acetaldehyde dehydrogenase 2 (315 aa).

13–16 (SGNI) is an NAD(+) binding site. Cysteine 131 serves as the catalytic Acyl-thioester intermediate. Residues 162–170 (SAGPGTRAN) and asparagine 290 contribute to the NAD(+) site.

Belongs to the acetaldehyde dehydrogenase family.

It carries out the reaction acetaldehyde + NAD(+) + CoA = acetyl-CoA + NADH + H(+). The sequence is that of Acetaldehyde dehydrogenase 2 from Pseudomonas putida (strain W619).